A 133-amino-acid chain; its full sequence is Small ribosomal subunit protein uS8 (133 aa).

The protein belongs to the universal ribosomal protein uS8 family. In terms of assembly, part of the 30S ribosomal subunit.

Functionally, one of the primary rRNA binding proteins, it binds directly to 16S rRNA central domain where it helps coordinate assembly of the platform of the 30S subunit. The protein is Small ribosomal subunit protein uS8 of Desulfurococcus amylolyticus (strain DSM 18924 / JCM 16383 / VKM B-2413 / 1221n) (Desulfurococcus kamchatkensis).